The primary structure comprises 397 residues: MSERKLFTSESVSEGHPDKIADQISDAILDAILAEDPDAHVAAETAVYTGSVHIFGEVSTTAYVDINRVVRDTIAEIGYNNAEYGFAAESVGVHPSLIEQSPDIAQGVNESLEVRGTGDQDSLDLIGAGDQGLMFGFAIDETPEFMPLPVSLSHKLVKKLADLRKSGEISYLRPDAKSQVTVEYDENDQPVRVDTVVISTQHDPEATNDQIRHDVIEKVIKAVIPAEYLDEDTKFFINPTGRFVIGGPQGDSGLTGRKIIVDTYGGYSRHGGGAFSGKDATKVDRSASYAARYIAKNIVAAGLARKAEVQLAYAIGVANPVSVRVDTFGTATVAERKLESAVRDLFDLRPAGIIQMLDLKRPIYRQTAAYGHMGRTDVDLPWEKLDKVDALKAAVEA.

Residue His-16 participates in ATP binding. Asp-18 contacts Mg(2+). Glu-44 contributes to the K(+) binding site. L-methionine is bound by residues Glu-57 and Gln-100. Positions 100-110 are flexible loop; that stretch reads QSPDIAQGVNE. Residues 175-177, 242-243, Asp-251, 257-258, Ala-274, and Lys-278 contribute to the ATP site; these read DAK, RF, and RK. Asp-251 provides a ligand contact to L-methionine. An L-methionine-binding site is contributed by Lys-282.

This sequence belongs to the AdoMet synthase family. As to quaternary structure, homotetramer; dimer of dimers. Requires Mg(2+) as cofactor. The cofactor is K(+).

Its subcellular location is the cytoplasm. The enzyme catalyses L-methionine + ATP + H2O = S-adenosyl-L-methionine + phosphate + diphosphate. It participates in amino-acid biosynthesis; S-adenosyl-L-methionine biosynthesis; S-adenosyl-L-methionine from L-methionine: step 1/1. Its function is as follows. Catalyzes the formation of S-adenosylmethionine (AdoMet) from methionine and ATP. The overall synthetic reaction is composed of two sequential steps, AdoMet formation and the subsequent tripolyphosphate hydrolysis which occurs prior to release of AdoMet from the enzyme. The protein is S-adenosylmethionine synthase of Streptococcus thermophilus (strain CNRZ 1066).